A 473-amino-acid polypeptide reads, in one-letter code: Arginine biosynthesis bifunctional protein ArgJ, mitochondrial (473 aa).

The substrate site is built by Thr201, Lys230, Thr241, Glu328, Asn468, and Thr473. The Nucleophile role is filled by Thr241.

It belongs to the ArgJ family. As to quaternary structure, heterodimer of an alpha and a beta chain. Post-translationally, the alpha and beta chains are autoproteolytically processed from a single precursor protein within the mitochondrion.

The protein resides in the mitochondrion matrix. It carries out the reaction N(2)-acetyl-L-ornithine + L-glutamate = N-acetyl-L-glutamate + L-ornithine. It catalyses the reaction L-glutamate + acetyl-CoA = N-acetyl-L-glutamate + CoA + H(+). It participates in amino-acid biosynthesis; L-arginine biosynthesis; L-ornithine and N-acetyl-L-glutamate from L-glutamate and N(2)-acetyl-L-ornithine (cyclic): step 1/1. The protein operates within amino-acid biosynthesis; L-arginine biosynthesis; N(2)-acetyl-L-ornithine from L-glutamate: step 1/4. In terms of biological role, catalyzes two activities which are involved in the cyclic version of arginine biosynthesis: the synthesis of acetylglutamate from glutamate and acetyl-CoA, and of ornithine by transacetylation between acetylornithine and glutamate. This chain is Arginine biosynthesis bifunctional protein ArgJ, mitochondrial, found in Ajellomyces capsulatus (strain H143) (Darling's disease fungus).